We begin with the raw amino-acid sequence, 313 residues long: Fructose-1,6-bisphosphatase class 1 (313 aa).

Mg(2+) is bound by residues E90, D111, L113, and D114. Substrate contacts are provided by residues 114-117 (DGSS), Y222, and K253. E259 contributes to the Mg(2+) binding site.

This sequence belongs to the FBPase class 1 family. Homotetramer. Requires Mg(2+) as cofactor.

It is found in the cytoplasm. It catalyses the reaction beta-D-fructose 1,6-bisphosphate + H2O = beta-D-fructose 6-phosphate + phosphate. It participates in carbohydrate biosynthesis; gluconeogenesis. In Geotalea uraniireducens (strain Rf4) (Geobacter uraniireducens), this protein is Fructose-1,6-bisphosphatase class 1.